The sequence spans 129 residues: Putative CC-type chemokine FPV061 (129 aa).

This sequence belongs to the intercrine beta (chemokine CC) family. Highly divergent.

This chain is Putative CC-type chemokine FPV061, found in Fowlpox virus (strain NVSL) (FPV).